Here is a 142-residue protein sequence, read N- to C-terminus: Large ribosomal subunit protein uL13 (142 aa).

The protein belongs to the universal ribosomal protein uL13 family. Part of the 50S ribosomal subunit.

In terms of biological role, this protein is one of the early assembly proteins of the 50S ribosomal subunit, although it is not seen to bind rRNA by itself. It is important during the early stages of 50S assembly. This is Large ribosomal subunit protein uL13 from Ralstonia pickettii (strain 12J).